The primary structure comprises 345 residues: Anthranilate phosphoribosyltransferase (345 aa).

5-phospho-alpha-D-ribose 1-diphosphate is bound by residues glycine 84, 87 to 88 (GD), threonine 92, 94 to 97 (NIST), 112 to 120 (KHGGRGVSS), and serine 124. Position 84 (glycine 84) interacts with anthranilate. Serine 96 provides a ligand contact to Mg(2+). Arginine 170 serves as a coordination point for anthranilate. 2 residues coordinate Mg(2+): aspartate 229 and glutamate 230.

This sequence belongs to the anthranilate phosphoribosyltransferase family. As to quaternary structure, homodimer. Mg(2+) is required as a cofactor.

The catalysed reaction is N-(5-phospho-beta-D-ribosyl)anthranilate + diphosphate = 5-phospho-alpha-D-ribose 1-diphosphate + anthranilate. Its pathway is amino-acid biosynthesis; L-tryptophan biosynthesis; L-tryptophan from chorismate: step 2/5. Functionally, catalyzes the transfer of the phosphoribosyl group of 5-phosphorylribose-1-pyrophosphate (PRPP) to anthranilate to yield N-(5'-phosphoribosyl)-anthranilate (PRA). This Paracidovorax citrulli (strain AAC00-1) (Acidovorax citrulli) protein is Anthranilate phosphoribosyltransferase.